A 358-amino-acid chain; its full sequence is Phospho-N-acetylmuramoyl-pentapeptide-transferase (358 aa).

10 helical membrane-spanning segments follow: residues 19–39 (YLTL…VLIG), 71–91 (TMGG…WADL), 95–115 (YVWV…IDDY), 126–146 (LIAR…ALYL), 166–186 (VMPQ…VGTS), 194–214 (GLDG…AIFA), 237–257 (LVIV…FNTY), 261–281 (VFMG…IAVL), 286–306 (IVLV…ILQV), and 336–356 (VIVR…ATLK).

It belongs to the glycosyltransferase 4 family. MraY subfamily. Requires Mg(2+) as cofactor.

Its subcellular location is the cell inner membrane. The catalysed reaction is UDP-N-acetyl-alpha-D-muramoyl-L-alanyl-gamma-D-glutamyl-meso-2,6-diaminopimeloyl-D-alanyl-D-alanine + di-trans,octa-cis-undecaprenyl phosphate = di-trans,octa-cis-undecaprenyl diphospho-N-acetyl-alpha-D-muramoyl-L-alanyl-D-glutamyl-meso-2,6-diaminopimeloyl-D-alanyl-D-alanine + UMP. The protein operates within cell wall biogenesis; peptidoglycan biosynthesis. In terms of biological role, catalyzes the initial step of the lipid cycle reactions in the biosynthesis of the cell wall peptidoglycan: transfers peptidoglycan precursor phospho-MurNAc-pentapeptide from UDP-MurNAc-pentapeptide onto the lipid carrier undecaprenyl phosphate, yielding undecaprenyl-pyrophosphoryl-MurNAc-pentapeptide, known as lipid I. The protein is Phospho-N-acetylmuramoyl-pentapeptide-transferase of Pseudoalteromonas atlantica (strain T6c / ATCC BAA-1087).